The following is a 431-amino-acid chain: Glucose-1-phosphate adenylyltransferase (431 aa).

Lys39 lines the beta-D-fructose 1,6-bisphosphate pocket. AMP is bound by residues Arg40, His46, and Arg52. Tyr114 provides a ligand contact to alpha-D-glucose 1-phosphate. Arg130 serves as a coordination point for AMP. Alpha-D-glucose 1-phosphate-binding positions include Gly179, 194–195 (EK), and Ser212. 2 residues coordinate AMP: Glu370 and Arg386. Residues 419–423 (REMLR) and 429–431 (QER) each bind beta-D-fructose 1,6-bisphosphate.

Belongs to the bacterial/plant glucose-1-phosphate adenylyltransferase family. In terms of assembly, homotetramer.

It catalyses the reaction alpha-D-glucose 1-phosphate + ATP + H(+) = ADP-alpha-D-glucose + diphosphate. The protein operates within glycan biosynthesis; glycogen biosynthesis. With respect to regulation, allosterically activated by fructose-1,6-bisphosphate (F16BP) and inhibited by AMP. Functionally, involved in the biosynthesis of ADP-glucose, a building block required for the elongation reactions to produce glycogen. Catalyzes the reaction between ATP and alpha-D-glucose 1-phosphate (G1P) to produce pyrophosphate and ADP-Glc. This Salmonella dublin (strain CT_02021853) protein is Glucose-1-phosphate adenylyltransferase.